A 487-amino-acid polypeptide reads, in one-letter code: Glycogen synthase (487 aa).

Residue Lys19 coordinates ADP-alpha-D-glucose.

It belongs to the glycosyltransferase 1 family. Bacterial/plant glycogen synthase subfamily.

The catalysed reaction is [(1-&gt;4)-alpha-D-glucosyl](n) + ADP-alpha-D-glucose = [(1-&gt;4)-alpha-D-glucosyl](n+1) + ADP + H(+). It functions in the pathway glycan biosynthesis; glycogen biosynthesis. Functionally, synthesizes alpha-1,4-glucan chains using ADP-glucose. This Moorella thermoacetica (strain ATCC 39073 / JCM 9320) protein is Glycogen synthase.